Reading from the N-terminus, the 264-residue chain is Glutamate racemase (264 aa).

Residues 10-11 (DS) and 42-43 (YG) each bind substrate. The Proton donor/acceptor role is filled by C73. 74–75 (NT) serves as a coordination point for substrate. C181 (proton donor/acceptor) is an active-site residue. Substrate is bound at residue 182 to 183 (TH).

It belongs to the aspartate/glutamate racemases family.

The enzyme catalyses L-glutamate = D-glutamate. Its pathway is cell wall biogenesis; peptidoglycan biosynthesis. Its function is as follows. Provides the (R)-glutamate required for cell wall biosynthesis. The sequence is that of Glutamate racemase from Thermoanaerobacter pseudethanolicus (strain ATCC 33223 / 39E) (Clostridium thermohydrosulfuricum).